We begin with the raw amino-acid sequence, 196 residues long: Transmembrane protein 126A (196 aa).

The Mitochondrial matrix portion of the chain corresponds to 1–34 (MESHKPSTNKDDLIFNIIPRKIKQLPESDRNLLE). A helical membrane pass occupies residues 35–55 (YGSAYIGLNAAFGGLIANSLF). At 56–57 (RR) the chain is on the mitochondrial intermembrane side. A helical transmembrane segment spans residues 58-78 (ILNVTQARVASSLPMAVIPFL). The Mitochondrial matrix portion of the chain corresponds to 79-106 (TANLSYHSFVSLPLSTGNLNCEICTTTR). The chain crosses the membrane as a helical span at residues 107 to 127 (GTLVGFVLGGLYPILLAIPVN). Topologically, residues 128–159 (GGLAARYESSPLPQRGNIFNYWITISKPVFRK) are mitochondrial intermembrane. Residues 160-176 (MLFPTLLQTAFAAYLGS) form a helical membrane-spanning segment. Over 177–196 (RQYKLLIKALQLPEPDLEIQ) the chain is Mitochondrial matrix.

This sequence belongs to the TMEM126 family. As to quaternary structure, interacts with OXA1L; promoting cotranslational quality control in mitochondria.

It localises to the mitochondrion inner membrane. Its function is as follows. Protein required for the cotranslational protein quality control in the inner membrane of the mitochondria. Associates with newly synthesized polypeptides and may act as a chaperone that cooperates with OXA1L for the insertion of newly synthesized mitochondrial proteins into the inner membrane. Required for the assembly of the ND4 module of mitochondrial complex I. This chain is Transmembrane protein 126A (Tmem126a), found in Rattus norvegicus (Rat).